A 330-amino-acid polypeptide reads, in one-letter code: DNA-directed RNA polymerase I subunit RPA43 (330 aa).

The segment at 251–330 (ADVTDVTPQE…ANFESPKKRQ (80 aa)) is disordered. Serine 306, serine 318, and serine 325 each carry phosphoserine. Positions 317-330 (HSEEANFESPKKRQ) are enriched in basic and acidic residues.

The protein belongs to the eukaryotic RPA43 RNA polymerase subunit family. In terms of assembly, component of the RNA polymerase I (Pol I) complex consisting of 13 subunits: a ten-subunit catalytic core composed of POLR1A/RPA1, POLR1B/RPA2, POLR1C/RPAC1, POLR1D/RPAC2, POLR1H/RPA12, POLR2E/RPABC1, POLR2F/RPABC2, POLR2H/RPABC3, POLR2K/RPABC4 and POLR2L/RPABC5; a mobile stalk subunit POLR1F/RPA43 protruding from the core and additional subunits homologous to general transcription factors POLR1E/RPA49 and POLR1G/RPA34. Interacts with RRN3/TIF-IA. Interacts with RRN3/TIF-IA. Widely expressed.

It localises to the nucleus. The protein localises to the nucleolus. Component of RNA polymerase I (Pol I), a DNA-dependent RNA polymerase which synthesizes ribosomal RNA precursors using the four ribonucleoside triphosphates as substrates. Through its association with RRN3/TIF-IA may be involved in recruitment of Pol I to rDNA promoters. The sequence is that of DNA-directed RNA polymerase I subunit RPA43 from Mus musculus (Mouse).